A 290-amino-acid chain; its full sequence is Shikimate dehydrogenase (NADP(+)) (290 aa).

Residues 20–22 and Thr67 contribute to the shikimate site; that span reads SLS. Catalysis depends on Lys71, which acts as the Proton acceptor. Asn92 and Asp107 together coordinate shikimate. NADP(+) is bound by residues 132 to 136 and Met228; that span reads GAGGA. Residue Tyr230 coordinates shikimate. Residue Gly251 coordinates NADP(+).

This sequence belongs to the shikimate dehydrogenase family. Homodimer.

It carries out the reaction shikimate + NADP(+) = 3-dehydroshikimate + NADPH + H(+). It functions in the pathway metabolic intermediate biosynthesis; chorismate biosynthesis; chorismate from D-erythrose 4-phosphate and phosphoenolpyruvate: step 4/7. Its function is as follows. Involved in the biosynthesis of the chorismate, which leads to the biosynthesis of aromatic amino acids. Catalyzes the reversible NADPH linked reduction of 3-dehydroshikimate (DHSA) to yield shikimate (SA). This chain is Shikimate dehydrogenase (NADP(+)), found in Geobacter sp. (strain M21).